The primary structure comprises 320 residues: Cytochrome f (320 aa).

The first 35 residues, 1–35 (MQTRNAFSCIKEGITRSISISVMIYIIIRAPFSNA), serve as a signal peptide directing secretion. 4 residues coordinate heme: Y36, C56, C59, and H60. A helical membrane pass occupies residues 286–306 (VQGLLFFLASIILAQIFLVLK).

This sequence belongs to the cytochrome f family. In terms of assembly, the 4 large subunits of the cytochrome b6-f complex are cytochrome b6, subunit IV (17 kDa polypeptide, petD), cytochrome f and the Rieske protein, while the 4 small subunits are PetG, PetL, PetM and PetN. The complex functions as a dimer. Heme serves as cofactor.

The protein resides in the plastid. It localises to the chloroplast thylakoid membrane. Functionally, component of the cytochrome b6-f complex, which mediates electron transfer between photosystem II (PSII) and photosystem I (PSI), cyclic electron flow around PSI, and state transitions. This Phaseolus vulgaris (Kidney bean) protein is Cytochrome f.